A 901-amino-acid polypeptide reads, in one-letter code: Desmocollin-2 (901 aa).

The signal sequence occupies residues 1–27; that stretch reads MEAARPSGSWNGALCRLLLLTLAILIF. Positions 28-135 are excised as a propeptide; it reads ASDACKNVTL…KEKVLRRAKR (108 aa). N-linked (GlcNAc...) asparagine glycans are attached at residues Asn34 and Asn166. Cadherin domains lie at 136-243, 244-355, 356-471, 472-579, and 580-694; these read RWAP…YPIF, TEET…LPTF, TRTS…GPEC, NPPI…FIPK, and KTVI…QLGK. Residues 136–694 lie on the Extracellular side of the membrane; it reads RWAPIPCSML…IGGGGVQLGK (559 aa). An N-linked (GlcNAc...) (complex) asparagine glycan is attached at Asn392. Asn546 and Asn629 each carry an N-linked (GlcNAc...) asparagine glycan. The chain crosses the membrane as a helical span at residues 695-715; that stretch reads WAILAILLGIALLFCILFTLV. Over 716–901 the chain is Cytoplasmic; the sequence is CGASGTSKQP…RTLAEACMKR (186 aa). Phosphoserine is present on residues Ser864, Ser868, and Ser873.

Interacts with DSP, PKP2 and JUP. Interacts with DSG3; the interaction may limit the interaction of DSC3 with p38MAPK family members and therefore repress p38MAPK signaling activation. Expressed at intercalated disks in the heart, where it is colocalized with CDH2 (at protein level). Expressed in intestinal mucosal cells (at protein level).

Its subcellular location is the cell membrane. The protein resides in the cell junction. It localises to the desmosome. Its function is as follows. A component of desmosome cell-cell junctions which are required for positive regulation of cellular adhesion. Promotes timely incorporation of DSG2 into desmosome intercellular junctions and promotes interaction of desmosome cell junctions with intermediate filament cytokeratin, via modulation of DSP phosphorylation. Plays an important role in desmosome-mediated maintenance of intestinal epithelial cell intercellular adhesion strength and barrier function. Positively regulates wound healing of intestinal mucosa via promotion of epithelial cell migration, and also plays a role in mechanotransduction of force between intestinal epithelial cells and extracellular matrix. May contribute to epidermal cell positioning (stratification) by mediating differential adhesiveness between cells that express different isoforms. May promote p38MAPK signaling activation that facilitates keratinocyte migration. In Homo sapiens (Human), this protein is Desmocollin-2.